The sequence spans 353 residues: Polyprenal reductase 2 (353 aa).

The next 6 membrane-spanning stretches (helical) occupy residues 11-31 (PLLC…ALPI), 78-98 (FMHF…AIWF), 175-195 (MHIV…LSLA), 234-254 (PLLK…WGSL), 291-308 (YLAE…SGAE), and 313-335 (WFLF…NWYL).

Belongs to the steroid 5-alpha reductase family. Polyprenal reductase subfamily.

Its subcellular location is the cell membrane. It catalyses the reaction a di-trans,poly-cis-dolichal + NADP(+) = a di-trans,poly-cis-polyprenal + NADPH + H(+). It functions in the pathway protein modification; protein glycosylation. Its function is as follows. Plays a key role in early steps of protein N-linked glycosylation by being involved in the conversion of polyprenol into dolichol. Acts as a polyprenal reductase that mediates the reduction of polyprenal into dolichal in a NADP-dependent mechanism. Dolichols are required for the synthesis of dolichol-linked monosaccharides and the oligosaccharide precursor used for N-glycosylation. The polypeptide is Polyprenal reductase 2 (Oryza sativa subsp. indica (Rice)).